Consider the following 295-residue polypeptide: Sulfotransferase 1 family member D1 (295 aa).

Position 48–53 (48–53 (KSGTTW)) interacts with 3'-phosphoadenylyl sulfate. Substrate contacts are provided by residues phenylalanine 81 and 106–108 (KTH). Histidine 108 (proton acceptor) is an active-site residue. 2 residues coordinate 3'-phosphoadenylyl sulfate: arginine 130 and serine 138. Residue phenylalanine 142 participates in substrate binding. Residues tyrosine 193, 227–232 (SSFSVM), and 257–259 (RKG) each bind 3'-phosphoadenylyl sulfate.

Belongs to the sulfotransferase 1 family. As to expression, detected in kidney and liver. Detected in kidney collecting duct cells.

It is found in the cytoplasm. In terms of biological role, sulfotransferase with broad substrate specificity that utilizes 3'-phospho-5'-adenylyl sulfate (PAPS) as sulfonate donor to catalyze the sulfate conjugation of catecholamines, such as dopamine, prostaglandins, leukotriene E4, drugs and xenobiotic compounds. Has sulfotransferase activity towards p-nitrophenol, 2-naphthylamine and minoxidil (in vitro). Sulfonation increases the water solubility of most compounds, and therefore their renal excretion, but it can also result in bioactivation to form active metabolites. In Mus musculus (Mouse), this protein is Sulfotransferase 1 family member D1 (Sult1d1).